Consider the following 247-residue polypeptide: Membrane-spanning 4-domains subfamily A member 6D (247 aa).

Topologically, residues 1-46 (MIPQVVTSETVTVISPNGISFPQTDKPQPSHQSQDSLKKHLKAEIK) are cytoplasmic. Residues 47–67 (VMAAIQIMCAVMVLSLGIILA) traverse the membrane as a helical segment. Over 68 to 80 (SVPSNLHFTSVFS) the chain is Extracellular. The chain crosses the membrane as a helical span at residues 81–101 (ILLESGYPFVGALFFAISGIL). Residues 102–121 (SIVTEKKMTKPLVHSSLALS) are Cytoplasmic-facing. The helical transmembrane segment at 122 to 142 (ILSVLSALTGIAILSVSLAAL) threads the bilayer. Over 143-180 (EPALQQCKLAFTQLDTTQDAYHFFSPEPLNSCFVAKAA) the chain is Extracellular. Residues 181–201 (LTGVFSLMLISSVLELGLAVL) form a helical membrane-spanning segment. Residues 202–247 (TATLWWKQSSSAFSGNVIFLSQNSKNKSSVSSESLCNPTYENILTS) lie on the Cytoplasmic side of the membrane. Phosphoserine is present on serine 235.

Belongs to the MS4A family. Expressed in thymus, spleen, intestine, colon, testis, heart, liver, brain, kidney, peripheral lymph node and bone marrow.

The protein resides in the membrane. May be involved in signal transduction as a component of a multimeric receptor complex. This is Membrane-spanning 4-domains subfamily A member 6D (Ms4a6d) from Mus musculus (Mouse).